The primary structure comprises 652 residues: uncharacterized protein (652 aa).

2 stretches are compositionally biased toward basic and acidic residues: residues 1-13 and 641-652; these read MSVTESKAKTERK and ATERTDNLADAA. Disordered stretches follow at residues 1-21 and 628-652; these read MSVTESKAKTERKSSRKPAKT and VPGWMCAPRPQTDATERTDNLADAA.

It belongs to the ParB family.

This is an uncharacterized protein from Escherichia coli O157:H7.